Consider the following 509-residue polypeptide: Apurinic-apyrimidinic endonuclease 1 (509 aa).

Residues 1 to 24 (MPRHCCCFVFHFLLYMLLINIVKN) form the signal peptide. Positions 144–188 (EEKDEECDEKTKQDNNKENIKNETIVQKKKIDKNNKTKEKIKTKS) are disordered. Composition is skewed to basic and acidic residues over residues 152–164 (EKTK…ENIK) and 175–188 (DKNN…KTKS). Zn(2+)-binding residues include H291, H331, E367, D401, H404, H438, D451, H453, and E483. H404 lines the Mn(2+) pocket. Mn(2+)-binding residues include D451 and H453.

The protein belongs to the AP endonuclease 2 family. The cofactor is Zn(2+). Requires Mn(2+) as cofactor. In terms of processing, may be proteolytically cleaved.

It localises to the mitochondrion. In terms of biological role, plays a role in mitochondrial DNA base excision repair (BER) pathway induced by oxidative stress. Has apurinic/apyrimidinic (AP) endonuclease activity towards double-stranded DNA (dsDNA) with a preference for C as opposite base. Has 3'-phosphatase activity; removes 3'-phosphate from blunt-end, recessed, and gapped DNA templates and thus, removes 3'-blocks for DNA polymerase activity during BER. Lacks 3'-5' exonuclease activity and does not cleave damaged bases by nucleotide incision repair (NIR). The sequence is that of Apurinic-apyrimidinic endonuclease 1 from Plasmodium berghei (strain Anka).